The following is a 473-amino-acid chain: Cell division protein FtsP (473 aa).

Residues 1–27 (MSFSRRQFIQVSGLAMCIGAAPLLVRA) constitute a signal peptide (tat-type signal).

The protein belongs to the FtsP family. Predicted to be exported by the Tat system. The position of the signal peptide cleavage has not been experimentally proven.

Its subcellular location is the periplasm. Functionally, cell division protein that is required for growth during stress conditions. May be involved in protecting or stabilizing the divisomal assembly under conditions of stress. This Photorhabdus laumondii subsp. laumondii (strain DSM 15139 / CIP 105565 / TT01) (Photorhabdus luminescens subsp. laumondii) protein is Cell division protein FtsP.